A 464-amino-acid polypeptide reads, in one-letter code: MSKKTGTKTSKSGSKKSNKDVEKLVDDEDIQDLSDKKNKISQSKNLVKNNKSSKNSKSSKSVKSTKTSTKTSLKKQVKTPPKKQTKTSSKKNKKDESDDDVTDNSDISDDDNTGNSDISDDENDQEEDNDISSDEEETETRQKSSGKKGNVNKDVGSSRKLKTDKNARNDNKVLEIRTTQTGALKQVFERVSGVISDCCLTFMPADKDINNAGDDNEYYEDESTKSSHKQSKTTDRPKNTGGIRIIRLTEDNNTLVKVVLEAANFEYFRCDEPKITVGVDMHTLHSHLKMINDDDPIVIYMKKDIQGSLYIRSLSENNDNSEEREIELFLMDIINPEIPVPKTEFQNRITMKSDKFHLICKHLSQNSTFVEITSINNEILFKGQSEGGKVTMTYKDTGYKKKEKPDQVIQGVYELRNLLGFSKCNKLCNTIEIYLKNDFPLVLVISVATLGKMYVFLSPIDNGN.

Disordered stretches follow at residues 1–168 and 210–239; these read MSKK…KNAR and NNAG…RPKN. The span at 41-71 shows a compositional bias: low complexity; sequence SQSKNLVKNNKSSKNSKSSKSVKSTKTSTKT. The span at 72 to 92 shows a compositional bias: basic residues; that stretch reads SLKKQVKTPPKKQTKTSSKKN. Residues 97 to 138 are compositionally biased toward acidic residues; the sequence is SDDDVTDNSDISDDDNTGNSDISDDENDQEEDNDISSDEEET.

Belongs to the PCNA family.

Functionally, sliding clamp subunit. Responsible for tethering the catalytic subunit of DNA polymerase to DNA during high-speed replication. The protein is Probable DNA polymerase sliding clamp (PCNA) of Acanthamoeba polyphaga (Amoeba).